Here is a 134-residue protein sequence, read N- to C-terminus: Phospholipase A2 (134 aa).

Ca(2+) is bound by residues Trp8, Gly10, and Gly12. Cystine bridges form between Cys9–Cys31, Cys30–Cys70, Cys37–Cys63, Cys61–Cys95, and Cys105–Cys113. An N-linked (GlcNAc...) asparagine glycan is attached at Asn13. His34 is an active-site residue. Asp35 contacts Ca(2+). Asp64 is a catalytic residue.

This sequence belongs to the phospholipase A2 family. Group III subfamily. Ca(2+) serves as cofactor. In terms of tissue distribution, expressed by the venom gland.

Its subcellular location is the secreted. The enzyme catalyses a 1,2-diacyl-sn-glycero-3-phosphocholine + H2O = a 1-acyl-sn-glycero-3-phosphocholine + a fatty acid + H(+). Its function is as follows. PLA2 catalyzes the calcium-dependent hydrolysis of the 2-acyl groups in 3-sn-phosphoglycerides. The protein is Phospholipase A2 of Apis cerana cerana (Oriental honeybee).